A 193-amino-acid chain; its full sequence is Dihydrofolate reductase (193 aa).

One can recognise a DHFR domain in the interval 1–193; it reads MIKLVFRYSP…VTTLTESVYK (193 aa). NADP(+) is bound by residues Arg7, 22-27, 52-55, and 73-77; these read FGLGDG, GAKT, and DLARD.

Belongs to the dihydrofolate reductase family.

It carries out the reaction (6S)-5,6,7,8-tetrahydrofolate + NADP(+) = 7,8-dihydrofolate + NADPH + H(+). It participates in cofactor biosynthesis; tetrahydrofolate biosynthesis; 5,6,7,8-tetrahydrofolate from 7,8-dihydrofolate: step 1/1. In terms of biological role, key enzyme in folate metabolism. Catalyzes an essential reaction for de novo glycine and purine synthesis, and for DNA precursor synthesis. This chain is Dihydrofolate reductase (frd), found in Escherichia coli (Bacteriophage T4).